We begin with the raw amino-acid sequence, 109 residues long: Spermidine export protein MdtI (109 aa).

4 helical membrane-spanning segments follow: residues 6–26, 36–56, 64–84, and 88–108; these read WIHA…NVFL, IYGI…SQAV, AYAL…WVLF, and LNNK…LIKL.

It belongs to the drug/metabolite transporter (DMT) superfamily. Small multidrug resistance (SMR) (TC 2.A.7.1) family. MdtI subfamily. As to quaternary structure, forms a complex with MdtJ.

Its subcellular location is the cell inner membrane. Catalyzes the excretion of spermidine. The polypeptide is Spermidine export protein MdtI (Klebsiella pneumoniae subsp. pneumoniae (strain ATCC 700721 / MGH 78578)).